Consider the following 279-residue polypeptide: Expansin-A22 (279 aa).

Residues 1–27 (MKLLEKMIYVEFLMIIMVIWVVPMSYG) form the signal peptide. Residues 76–186 (QGACGYGNLF…RRIPCSKTGG (111 aa)) form the Expansin-like EG45 domain. An Expansin-like CBD domain is found at 196-275 (YFLMVLIYNV…NWGFGQTFDG (80 aa)).

This sequence belongs to the expansin family. Expansin A subfamily.

The protein localises to the secreted. Its subcellular location is the cell wall. It is found in the membrane. In terms of biological role, causes loosening and extension of plant cell walls by disrupting non-covalent bonding between cellulose microfibrils and matrix glucans. No enzymatic activity has been found. This is Expansin-A22 (EXPA22) from Arabidopsis thaliana (Mouse-ear cress).